Reading from the N-terminus, the 229-residue chain is Ribonuclease 3 (229 aa).

The 126-residue stretch at 7 to 132 (LRAFESRIGH…VIAAVYLDAG (126 aa)) folds into the RNase III domain. Mg(2+) is bound at residue E45. D49 is a catalytic residue. Mg(2+) is bound by residues D118 and E121. E121 is an active-site residue. The region spanning 157–226 (DAKTALQEWA…ARALLARMEA (70 aa)) is the DRBM domain.

This sequence belongs to the ribonuclease III family. As to quaternary structure, homodimer. Mg(2+) serves as cofactor.

It is found in the cytoplasm. It catalyses the reaction Endonucleolytic cleavage to 5'-phosphomonoester.. In terms of biological role, digests double-stranded RNA. Involved in the processing of primary rRNA transcript to yield the immediate precursors to the large and small rRNAs (23S and 16S). Processes some mRNAs, and tRNAs when they are encoded in the rRNA operon. Processes pre-crRNA and tracrRNA of type II CRISPR loci if present in the organism. This Cereibacter sphaeroides (strain ATCC 17025 / ATH 2.4.3) (Rhodobacter sphaeroides) protein is Ribonuclease 3.